A 189-amino-acid polypeptide reads, in one-letter code: MGRTRDNKAAVIADLKELLSDAQLAFVIDYQGLSVSEITELRNRLRPTGSICKVTKNTFMEMAVQEDDNWQPMTQFLTGSSAFVLVKDDVGGAVRAYQGFKKDTKKTEFRGGVMQGQALNEDQVKAIADLPSKEELMAQIAGALNSIATKLAVGINEVPSSVARGINEVPGSLGRVVNAIANKEEGNAA.

The protein belongs to the universal ribosomal protein uL10 family. In terms of assembly, part of the ribosomal stalk of the 50S ribosomal subunit. The N-terminus interacts with L11 and the large rRNA to form the base of the stalk. The C-terminus forms an elongated spine to which L12 dimers bind in a sequential fashion forming a multimeric L10(L12)X complex.

Its function is as follows. Forms part of the ribosomal stalk, playing a central role in the interaction of the ribosome with GTP-bound translation factors. The protein is Large ribosomal subunit protein uL10 of Rippkaea orientalis (strain PCC 8801 / RF-1) (Cyanothece sp. (strain PCC 8801)).